A 927-amino-acid chain; its full sequence is Roc-COR-CHAT protease (927 aa).

LRR repeat units follow at residues 38–61 (AGQV…TEAQ), 83–107 (LPHL…GFRS), 109–125 (QQVY…VFEG), and 127–151 (CPAL…GFRA). An LRR 5 region spans residues 152-170 (LKYIYATNNVLQKITFNRS). LRR repeat units lie at residues 171-194 (MRLL…LSEI) and 195-217 (ETME…IWDR). Residues 436–623 (EWLGVKEDLN…ELRWKKGVVL (188 aa)) form the COR domain. Active-site residues include His796 and Cys840.

Functionally, a dedicated protease for gasdermin bGSDM; cleaves the bGSDM precursor, releasing the pore-forming moiety, which integrates into the membrane and triggers cell death. Probably involved in defense against bacteriophages. Expression of bGSDM and this neighboring protease is highly toxic in E.coli. Cells expressing the gene pair stop dividing and lose membrane integrity. Both proteins are required to kill E.coli. The bGSDM recognition site is larger than the 8 residues surrounding the cleavage site; replacement of the endogenous recognition site by the Runella site (NRVLGENM) in a number of other bGSDMs is not sufficient for them to be cleaved. The protein is Roc-COR-CHAT protease of Runella zeae (strain ATCC BAA-293 / DSM 19591 / LMG 21438 / NS12).